An 84-amino-acid chain; its full sequence is Acyl carrier protein MbtL (84 aa).

Positions S6 to Y81 constitute a Carrier domain. S41 carries the post-translational modification O-(pantetheine 4'-phosphoryl)serine.

In terms of processing, 4'-phosphopantetheine is transferred from CoA to a specific serine of apo-ACP, leading to the activated holo-ACP form.

The protein localises to the cytoplasm. It participates in siderophore biosynthesis; mycobactin biosynthesis. Functionally, acyl carrier protein involved in the formation of acyl-S-ACP intermediates within the mycobactin biosynthesis process. The aliphatic chains carried by ACP are subsequently transferred on to the mycobactin core by MbtK. The chain is Acyl carrier protein MbtL (mbtL) from Mycobacterium bovis (strain ATCC BAA-935 / AF2122/97).